The primary structure comprises 295 residues: Very long chain fatty acid elongase 5 (295 aa).

Transmembrane regions (helical) follow at residues 26 to 46 (WLLLDNYVPTILFTALYLFIV), 64 to 84 (ILVVYNLGLTLLSLYMFYELV), 112 to 132 (VLWWYYFSKLIEFMDTFFFIL), 150 to 170 (MLNIWWFVMNWVPCGHSYFGA), 175 to 192 (FIHVLMYSYYGLSAIPAM), 207 to 223 (LTQFVLTMTQTTCAMIW), and 227 to 247 (FPMGWLYFQNCYMISLIILFG). Residues 265 to 295 (YQNGSASAVNGHTNSFSSLEDNVKQRKQRQD) form a disordered region. The span at 266 to 284 (QNGSASAVNGHTNSFSSLE) shows a compositional bias: polar residues. The span at 285-295 (DNVKQRKQRQD) shows a compositional bias: basic and acidic residues.

This sequence belongs to the ELO family. ELOVL5 subfamily.

The protein localises to the endoplasmic reticulum membrane. It localises to the cell projection. The protein resides in the dendrite. The catalysed reaction is a very-long-chain acyl-CoA + malonyl-CoA + H(+) = a very-long-chain 3-oxoacyl-CoA + CO2 + CoA. It carries out the reaction (6Z,9Z,12Z)-octadecatrienoyl-CoA + malonyl-CoA + H(+) = (8Z,11Z,14Z)-3-oxoeicosatrienoyl-CoA + CO2 + CoA. It catalyses the reaction (9Z,12Z,15Z)-octadecatrienoyl-CoA + malonyl-CoA + H(+) = (11Z,14Z,17Z)-3-oxoeicosatrienoyl-CoA + CO2 + CoA. The enzyme catalyses (9Z)-hexadecenoyl-CoA + malonyl-CoA + H(+) = 3-oxo-(11Z)-octadecenoyl-CoA + CO2 + CoA. The catalysed reaction is (9Z)-octadecenoyl-CoA + malonyl-CoA + H(+) = 3-oxo-(11Z)-eicosenoyl-CoA + CO2 + CoA. It carries out the reaction (11Z)-octadecenoyl-CoA + malonyl-CoA + H(+) = 3-oxo-(13Z)-eicosenoyl-CoA + CO2 + CoA. It catalyses the reaction (9Z,12Z)-octadecadienoyl-CoA + malonyl-CoA + H(+) = (11Z,14Z)-3-oxoicosa-11,14-dienoyl-CoA + CO2 + CoA. The enzyme catalyses (6Z,9Z,12Z,15Z)-octadecatetraenoyl-CoA + malonyl-CoA + H(+) = (8Z,11Z,14Z,17Z)-3-oxoicosatetraenoyl-CoA + CO2 + CoA. The catalysed reaction is (5Z,8Z,11Z,14Z)-eicosatetraenoyl-CoA + malonyl-CoA + H(+) = (7Z,10Z,13Z,16Z)-3-oxodocosatetraenoyl-CoA + CO2 + CoA. It carries out the reaction (5Z,8Z,11Z,14Z,17Z)-eicosapentaenoyl-CoA + malonyl-CoA + H(+) = 3-oxo-(7Z,10Z,13Z,16Z,19Z)-docosapentaenoyl-CoA + CO2 + CoA. It participates in lipid metabolism; polyunsaturated fatty acid biosynthesis. In terms of biological role, catalyzes the first and rate-limiting reaction of the four reactions that constitute the long-chain fatty acids elongation cycle. This endoplasmic reticulum-bound enzymatic process allows the addition of 2 carbons to the chain of long- and very long-chain fatty acids (VLCFAs) per cycle. Condensing enzyme that acts specifically toward polyunsaturated acyl-CoA with the higher activity toward C18:3(n-6) acyl-CoA. May participate in the production of monounsaturated and of polyunsaturated VLCFAs of different chain lengths that are involved in multiple biological processes as precursors of membrane lipids and lipid mediators. In conditions where the essential linoleic and alpha linoleic fatty acids are lacking it is also involved in the synthesis of Mead acid from oleic acid. The polypeptide is Very long chain fatty acid elongase 5 (Xenopus tropicalis (Western clawed frog)).